The chain runs to 273 residues: 2,3,4,5-tetrahydropyridine-2,6-dicarboxylate N-succinyltransferase (273 aa).

Substrate-binding residues include Arg104 and Asp141.

This sequence belongs to the transferase hexapeptide repeat family. Homotrimer.

It localises to the cytoplasm. The catalysed reaction is (S)-2,3,4,5-tetrahydrodipicolinate + succinyl-CoA + H2O = (S)-2-succinylamino-6-oxoheptanedioate + CoA. It functions in the pathway amino-acid biosynthesis; L-lysine biosynthesis via DAP pathway; LL-2,6-diaminopimelate from (S)-tetrahydrodipicolinate (succinylase route): step 1/3. The polypeptide is 2,3,4,5-tetrahydropyridine-2,6-dicarboxylate N-succinyltransferase (Nitrosospira multiformis (strain ATCC 25196 / NCIMB 11849 / C 71)).